The chain runs to 1082 residues: Transcription elongation factor SPT5 (1082 aa).

Residues 1–28 (MSDSEDSNFSEEEDSERSSEAEEAEVEE) are compositionally biased toward acidic residues. Residues 1–88 (MSDSEDSNFS…DVDDEYEDED (88 aa)) form a disordered region. S32 and S36 each carry phosphoserine. Composition is skewed to acidic residues over residues 38-62 (KEEE…EDDD) and 76-88 (DEAD…EDED). A Glycyl lysine isopeptide (Lys-Gly) (interchain with G-Cter in SUMO2) cross-link involves residue K141. Positions 174-268 (DPNLWTVKCK…TDVLKVVKEV (95 aa)) are interaction with SUPT4H1 and SUPT4H2. Residues 271–304 (LKPKSWVRLKRGIYKDDIAQVDYVEPSQNTISLK) form the KOW 1 domain. Residues 311-418 (YDRIKARMSL…STGKEREHNF (108 aa)) form an interaction with RNA polymerase II region. A UBR5-degron motif is present at residues 326–332 (KRKKFKR). 2 consecutive KOW domains span residues 418-449 (FQPG…ITIM) and 470-501 (FKMG…VILF). Residue K577 participates in RNA binding. The KOW 4 domain maps to 592 to 625 (IHVKDIVKVIDGPHSGREGEIRHLYRSFAFLHCK). Residue R617 coordinates DNA. T661 is modified (phosphothreonine). Phosphoserine occurs at positions 664 and 684. The interval 669–694 (SPMHPSAEGQHGGFGSPGGMSRGRGR) is disordered. A compositionally biased stretch (gly residues) spans 678–690 (QHGGFGSPGGMSR). 2 positions are modified to asymmetric dimethylarginine; alternate: R690 and R692. Omega-N-methylarginine; alternate occurs at positions 690 and 692. R692 is modified (symmetric dimethylarginine; alternate). Residues 698 to 731 (ELIGQTVRISQGPYKGYIGVVKDATESTARVELH) enclose the KOW 5 domain. An N6-acetyllysine modification is found at K712. Over residues 741 to 801 (RQRLTTVDSQ…RTPHYGSQTP (61 aa)) the composition is skewed to polar residues. Positions 741–972 (RQRLTTVDSQ…GSGIEQNSSD (232 aa)) are disordered. The stretch at 748 to 753 (DSQRPG) is one CTR1-1; approximate repeat. A 9 X 7 AA approximate tandem repeats of G-S-[QR]-T-P-X-[YQ], motif CTR1 region spans residues 748–811 (DSQRPGGMTS…LHDGSRTPAQ (64 aa)). Residues 754–759 (GMTSTY) form a CTR1-2 repeat. Residues 760–765 (GRTPMY) form a CTR1-3 repeat. The CTR1-4 repeat unit spans residues 766 to 772 (GSQTPMY). 2 positions are modified to phosphothreonine; by CDK9: T769 and T778. The stretch at 775-781 (GSRTPMY) is one CTR1-5 repeat. The stretch at 782 to 788 (GSQTPLQ) is one CTR1-6 repeat. Position 783 is a phosphoserine (S783). 2 positions are modified to phosphothreonine: T785 and T793. The stretch at 790-796 (GSRTPHY) is one CTR1-7 repeat. The stretch at 797 to 803 (GSQTPLH) is one CTR1-8 repeat. At S798 the chain carries Phosphoserine. T800 and T808 each carry phosphothreonine. One copy of the CTR1-9 repeat lies at 805–811 (GSRTPAQ). Residues 828–838 (EEYEYAFDDEP) are compositionally biased toward acidic residues. The stretch at 838 to 845 (PTPSPQAY) is one CTR2-1 repeat. Residues 838-944 (PTPSPQAYGG…ASPSPSPVGY (107 aa)) are 10 X 8 AA approximate tandem repeats of P-[TS]-P-S-P-[QA]-[SG]-Y, motif CTR2. Residues 848–856 (TPNPQTPGY) form a CTR2-2; approximate repeat. Pro residues predominate over residues 851-860 (PQTPGYPDPS). One copy of the CTR2-3; approximate repeat lies at 857-863 (PDPSSPQ). A compositionally biased stretch (polar residues) spans 861 to 884 (SPQVNPQYNPQTPGTPAMYNTDQF). The CTR2-4; half-length repeat unit spans residues 875 to 879 (TPAMY). One copy of the CTR2-5; approximate repeat lies at 890 to 896 (PSPQGSY). Low complexity predominate over residues 890–905 (PSPQGSYQPSPSPQSY). Residues 898-905 (PSPSPQSY) form a CTR2-6 repeat. A CTR2-7; approximate repeat occupies 910 to 915 (PSPAGY). One copy of the CTR2-8 repeat lies at 918 to 924 (THSPASY). Residues 926 to 933 (PTPSPMAY) form a CTR2-9 repeat. The stretch at 937–944 (PSPSPVGY) is one CTR2-10 repeat. T1028 carries the post-translational modification Phosphothreonine. A Glycyl lysine isopeptide (Lys-Gly) (interchain with G-Cter in SUMO2) cross-link involves residue K1031.

The protein belongs to the SPT5 family. Interacts with SUPT4H1 to form DSIF. DSIF interacts with the positive transcription elongation factor b complex (P-TEFb complex), which is composed of CDK9 and cyclin-T (CCNT1 or CCNT2). DSIF interacts with RNA polymerase II, and this interaction is reduced by phosphorylation of the C-terminal domain (CTD) of POLR2A by P-TEFb. DSIF also interacts with the NELF complex, which is composed of NELFA, NELFB, NELFD and NELFE, and this interaction occurs following prior binding of DSIF to RNA polymerase II. Also interacts with PRMT1/HRMT1L2, HTATSF1/TATSF1, RNGTT/CAP1A, PRMT5/SKB1, SUPT6H, and can interact with PIN1. Component of a complex which is at least composed of HTATSF1/Tat-SF1, the P-TEFb complex components CDK9 and CCNT1, RNA polymerase II, SUPT5H, and NCL/nucleolin. Interacts with MCM3AP. In terms of processing, methylated by PRMT1/HRMT1L2 and PRMT5/SKB1. Methylation negatively regulates interaction with P-TEFb and RNA polymerase II. Post-translationally, phosphorylated by CDK7 and CDK9. Phosphorylation by P-TEFb (CDK9) at Thr residues of the C-terminal repeats alleviates transcriptional pausing and promotes transcription elongation. Dephosphorylated by the INTAC complex when transcripts are unfavorably configured for transcriptional elongation, leading to premature transcription termination: dephosphorylation is mediated by the PPP2CA component of the INTAC complex. Dephosphorylated by the PNUTS-PP1 complex in termination zones downstream of poly(A) sites, thereby promoting deceleration of RNA polymerase II transcription. Dephosphorylated by the PNUTS-PP1 complex in termination zones downstream of poly(A) sites, thereby promoting deceleration of RNA polymerase II transcription. Phosphorylation may also stimulate interaction with PIN1. Bulk phosphorylation occurs predominantly in mitosis. Ubiquitinated by UBR5 when not assembled in the DSIF complex, leading to its degradation: UBR5 recognizes and binds a degron that is not accessible when SUPT5H is part of the DSIF complex.

It localises to the nucleus. Component of the DRB sensitivity-inducing factor complex (DSIF complex), which regulates mRNA processing and transcription elongation by RNA polymerase II. DSIF positively regulates mRNA capping by stimulating the mRNA guanylyltransferase activity of RNGTT/CAP1A. DSIF also acts cooperatively with the negative elongation factor complex (NELF complex) to enhance transcriptional pausing at sites proximal to the promoter. Transcriptional pausing may facilitate the assembly of an elongation competent RNA polymerase II complex. DSIF and NELF promote pausing by inhibition of the transcription elongation factor TFIIS/S-II. TFIIS/S-II binds to RNA polymerase II at transcription pause sites and stimulates the weak intrinsic nuclease activity of the enzyme. Cleavage of blocked transcripts by RNA polymerase II promotes the resumption of transcription from the new 3' terminus and may allow repeated attempts at transcription through natural pause sites. Following phosphorylation by CDK9, DSIF can also positively regulate transcriptional elongation. This is Transcription elongation factor SPT5 (Supt5h) from Mus musculus (Mouse).